Here is a 362-residue protein sequence, read N- to C-terminus: Innexin-17 (362 aa).

Helical transmembrane passes span 27 to 47 (YFTV…QYVG), 101 to 121 (WVPF…VIWN), 189 to 209 (FLAT…MGLG), and 266 to 286 (LFIA…FDIF).

It belongs to the pannexin family.

It is found in the cell membrane. The protein localises to the cell junction. It localises to the gap junction. In terms of biological role, structural component of the gap junctions. This chain is Innexin-17, found in Caenorhabditis elegans.